The chain runs to 590 residues: MSQDSKPTKSAAGAIAEPSNFLRQIIDHDLASGAFAQRTNLAGEAIPSIITRFPPEPNGYLHIGHAKSICLNFGLAADYNNQSGGARCNMRLDDTNPVKEDVEYADSILDAVKWLGFDWGTHLYHASDYFDRLYEFAEILIQNSKAYVDSQSADDIHTNRGNFGQVGKNSPYRERTPDENLQLFREMRDGKFKDGEHVLRLKIDMAHPNIVMRDPVVYRIRHTDHHRTGSKWCIYPLYDFTHCISDALENVSHSICTLEFENNRPLYDWIVNSLKELGVFKDPVPHQYEFARLNLTYTITSKRKLLQLVEEQHVEGWDDPRMPTIVGIRRRGYTPESIRLFCERIGVSKADSWIDMSTLDQALRDDLEARAPRATAVLKPLKLVVENFDAAHSEACSAPRHPHHPEWGNREFNFTKELWIEADDFMQEPVKGFFRLYPPIGDQPGSRVRLRHGFVVECTDFETDAKGNITQVNVNYFPDSKSGTPGSNNYKVKGNIHWISAAEAIPAEVRLYDHLFTDPHPDSGDKNFLDTINPHSKETIKAYLEPCMKDVKPEDRFQFERHGYFVADQNDSAPGKPVFNRTVGLKDSWK.

The 'HIGH' region signature appears at 55–65 (PEPNGYLHIGH). Residues 56–58 (EPN) and 62–68 (HIGHAKS) each bind ATP. The L-glutamine site is built by D93 and Y238. Residues T257 and 292–293 (RL) contribute to the ATP site. The 'KMSKS' region signature appears at 299–303 (ITSKR).

This sequence belongs to the class-I aminoacyl-tRNA synthetase family. Monomer.

It is found in the cytoplasm. The enzyme catalyses tRNA(Gln) + L-glutamine + ATP = L-glutaminyl-tRNA(Gln) + AMP + diphosphate. This Polynucleobacter asymbioticus (strain DSM 18221 / CIP 109841 / QLW-P1DMWA-1) (Polynucleobacter necessarius subsp. asymbioticus) protein is Glutamine--tRNA ligase.